A 528-amino-acid chain; its full sequence is Tyrosine--tRNA ligase, cytoplasmic (528 aa).

An L-tyrosine-binding site is contributed by Tyr-39. Residues 44–52 (TTGKPHVAY) carry the 'HIGH' region motif. The L-tyrosine site is built by Tyr-166, Gln-170, Asp-173, and Gln-188. A 'KMSKS' region motif is present at residues 222 to 226 (KMSSS). A Nuclear localization signal motif is present at residues 242–247 (KKKLKK). The interval 335 to 364 (KLSNDAYPGASKQKTVPKGSTKNSGPEEID) is disordered. Residues 346–358 (KQKTVPKGSTKNS) show a composition bias toward polar residues. Positions 364–468 (DPSLLDLRVG…TGSAPGERIY (105 aa)) constitute a tRNA-binding domain.

This sequence belongs to the class-I aminoacyl-tRNA synthetase family. In terms of assembly, homodimer.

The protein localises to the cytoplasm. It localises to the nucleus. It carries out the reaction tRNA(Tyr) + L-tyrosine + ATP = L-tyrosyl-tRNA(Tyr) + AMP + diphosphate + H(+). In terms of biological role, catalyzes the attachment of tyrosine to tRNA(Tyr) in a two-step reaction: tyrosine is first activated by ATP to form Tyr-AMP and then transferred to the acceptor end of tRNA(Tyr). In Xenopus tropicalis (Western clawed frog), this protein is Tyrosine--tRNA ligase, cytoplasmic (yars1).